A 919-amino-acid polypeptide reads, in one-letter code: PAX3- and PAX7-binding protein 1 (919 aa).

The span at 1–11 (MFRKARRVNVR) shows a compositional bias: basic residues. Disordered stretches follow at residues 1-120 (MFRK…ENEE), 151-206 (KTEL…GGAF), and 237-277 (AREL…RIVF). The residue at position 16 (Ser16) is a Phosphoserine. The span at 16–28 (SEEEERERDEEQE) shows a compositional bias: acidic residues. Low complexity predominate over residues 49-59 (RAPAGESLLGP). The segment covering 75–87 (AEAGGGISGGAEP) has biased composition (gly residues). A Glycyl lysine isopeptide (Lys-Gly) (interchain with G-Cter in SUMO1); alternate cross-link involves residue Lys151. A Glycyl lysine isopeptide (Lys-Gly) (interchain with G-Cter in SUMO2); alternate cross-link involves residue Lys151. The residue at position 160 (Ser160) is a Phosphoserine. The span at 163–174 (PLDKTCHAKDTN) shows a compositional bias: basic and acidic residues. Residues 185–195 (GEDEMDMESEK) show a composition bias toward acidic residues. Residue Ser193 is modified to Phosphoserine. The segment covering 237–258 (ARELGDFTPHDSEPGKGRLVRE) has biased composition (basic and acidic residues). A compositionally biased stretch (acidic residues) spans 259–270 (DENDASDDEDDD). Phosphoserine is present on residues Ser264, Ser297, Ser559, and Ser560. Residues 380 to 560 (TPSNEMAPVT…MADHLEGLSS (181 aa)) are necessary and sufficient for interaction with PAX7. Residues 533-566 (EREARRTRRRQAREQTGQMADHLEGLSSDDEETS) are disordered. Thr565 carries the post-translational modification Phosphothreonine.

Belongs to the GCF family. As to quaternary structure, interacts with PAX3 and PAX7. Interacts with WDR5; associates with a histone methyltransferase (HMT) complex composed at least of RBBP5, ASH2L, SET1, SET2 and KMT2A/MLL1, KMT2D/MLL2, KMT2C/MLL3 and KMT2B/MLL4 through direct interaction with WDR5. Ubiquitously expressed in all tissues tested including skeletal muscle. Expressed in primary myoblasts.

The protein localises to the nucleus. Adapter protein linking the transcription factors PAX3 and PAX7 to the histone methylation machinery and involved in myogenesis. Associates with a histone methyltransferase complex that specifically mediates dimethylation and trimethylation of 'Lys-4' of histone H3. Mediates the recruitment of that complex to the transcription factors PAX3 and PAX7 on chromatin to regulate the expression of genes involved in muscle progenitor cells proliferation including ID3 and CDC20. The sequence is that of PAX3- and PAX7-binding protein 1 (Paxbp1) from Mus musculus (Mouse).